The sequence spans 56 residues: Large ribosomal subunit protein bL33 (56 aa).

This sequence belongs to the bacterial ribosomal protein bL33 family.

The polypeptide is Large ribosomal subunit protein bL33 (Anaplasma marginale (strain Florida)).